The chain runs to 359 residues: Decorin (359 aa).

Residues 1–16 form the signal peptide; it reads MKATIILLLLAQVSWA. A propeptide spanning residues 17–30 is cleaved from the precursor; that stretch reads GPFQQRGLFDFMLE. O-linked (Xyl...) (glycosaminoglycan) serine glycosylation occurs at S34. Disulfide bonds link C54–C60 and C58–C67. 12 LRR repeats span residues 73–93, 94–117, 118–141, 142–162, 163–186, 187–212, 213–233, 234–257, 258–281, 282–304, 305–334, and 335–359; these read DKVP…NNKI, TEIK…NNKI, SKVS…KNQL, KELP…ENEI, TKVR…TNPL, KSSG…DTNI, TSIP…GNKI, SRVD…FNSI, SAVD…NNKL, TRVP…NNNI, SVVG…SNPV, and QYWE…GNYK. A glycan (N-linked (GlcNAc...) asparagine) is linked at N211. N-linked (GlcNAc...) asparagine glycosylation is found at N262 and N303. A disulfide bond links C313 and C346.

This sequence belongs to the small leucine-rich proteoglycan (SLRP) family. SLRP class I subfamily. As to quaternary structure, binds to type I and type II collagen, fibronectin and TGF-beta. Forms a ternary complex with MFAP2 and ELN. Interacts with DPT. In terms of processing, the attached glycosaminoglycan chain can be either chondroitin sulfate or dermatan sulfate depending upon the tissue of origin. In terms of tissue distribution, detected in placenta (at protein level). Detected in cerebrospinal fluid, fibroblasts and urine (at protein level).

It localises to the secreted. It is found in the extracellular space. Its subcellular location is the extracellular matrix. Functionally, may affect the rate of fibrils formation. The polypeptide is Decorin (DCN) (Homo sapiens (Human)).